The chain runs to 402 residues: Tryptophan--tRNA ligase, cytoplasmic (402 aa).

Positions 97-106 (PSSEALHLGH) match the 'HIGH' region motif. The 'KMSKS' region motif lies at 280 to 284 (KMSAS).

This sequence belongs to the class-I aminoacyl-tRNA synthetase family.

It localises to the cytoplasm. It is found in the cytosol. The catalysed reaction is tRNA(Trp) + L-tryptophan + ATP = L-tryptophyl-tRNA(Trp) + AMP + diphosphate + H(+). The chain is Tryptophan--tRNA ligase, cytoplasmic from Arabidopsis thaliana (Mouse-ear cress).